The sequence spans 399 residues: Brefeldin A resistance protein (399 aa).

Composition is skewed to basic and acidic residues over residues 1-31 (MTSK…DETS), 49-69 (SKSE…KETT), and 101-130 (KVEE…KESA). Disordered stretches follow at residues 1–173 (MTSK…FGAF) and 191–269 (KKFA…SEII). Low complexity predominate over residues 138-157 (SPFSQFASFSNASSPFSNVS). Basic and acidic residues-rich tracts occupy residues 205-217 (SGKE…KSSE) and 241-252 (TKSEPKEADKGS). Residues 253-263 (GDSTKSTMHQL) show a composition bias toward polar residues. Residues 256–396 (TKSTMHQLSD…VLEAIPKGGR (141 aa)) form the RanBD1 domain.

In terms of processing, phosphorylated.

It localises to the nucleus. The sequence is that of Brefeldin A resistance protein (hba1) from Schizosaccharomyces pombe (strain 972 / ATCC 24843) (Fission yeast).